The following is a 361-amino-acid chain: Ferredoxin--NADP reductase 1 (361 aa).

Residues D44, Q52, Y57, A97, F142, D308, and S349 each coordinate FAD.

This sequence belongs to the ferredoxin--NADP reductase type 2 family. Homodimer. The cofactor is FAD.

The catalysed reaction is 2 reduced [2Fe-2S]-[ferredoxin] + NADP(+) + H(+) = 2 oxidized [2Fe-2S]-[ferredoxin] + NADPH. This chain is Ferredoxin--NADP reductase 1, found in Cupriavidus necator (strain ATCC 17699 / DSM 428 / KCTC 22496 / NCIMB 10442 / H16 / Stanier 337) (Ralstonia eutropha).